The primary structure comprises 24 residues: Poly-His-poly-Gly peptide 1 (24 aa).

The span at 1–13 (EDDHHHHHHHHHG) shows a compositional bias: basic residues. The interval 1 to 24 (EDDHHHHHHHHHGVGGGGGGGGGG) is disordered. Residues 14-24 (VGGGGGGGGGG) show a composition bias toward gly residues.

Expressed by the venom gland.

Its subcellular location is the secreted. Its function is as follows. May serve as a metalloproteinase inhibitor during glandular storage. Their inhibition may be instantly disengaged, by dilution or physiochemical change, when venom is injected into tissue of the victim. The protein is Poly-His-poly-Gly peptide 1 of Atheris chlorechis (Western bush viper).